A 124-amino-acid polypeptide reads, in one-letter code: Small ribosomal subunit protein uS12 (124 aa).

Residue aspartate 89 is modified to 3-methylthioaspartic acid.

The protein belongs to the universal ribosomal protein uS12 family. In terms of assembly, part of the 30S ribosomal subunit. Contacts proteins S8 and S17. May interact with IF1 in the 30S initiation complex.

With S4 and S5 plays an important role in translational accuracy. Functionally, interacts with and stabilizes bases of the 16S rRNA that are involved in tRNA selection in the A site and with the mRNA backbone. Located at the interface of the 30S and 50S subunits, it traverses the body of the 30S subunit contacting proteins on the other side and probably holding the rRNA structure together. The combined cluster of proteins S8, S12 and S17 appears to hold together the shoulder and platform of the 30S subunit. This Hamiltonella defensa subsp. Acyrthosiphon pisum (strain 5AT) protein is Small ribosomal subunit protein uS12.